The primary structure comprises 402 residues: Probable peptidoglycan glycosyltransferase FtsW (402 aa).

The Cytoplasmic portion of the chain corresponds to 1-24; that stretch reads MLYRLKLLLSGQNTKKERVRAKLE. Residues 25-45 traverse the membrane as a helical segment; sequence IDISIVFVMLGLLIFGWVMVT. The Periplasmic segment spans residues 46–63; sequence SASMVVALDDYNNPYFYS. Residues 64–84 traverse the membrane as a helical segment; sequence IRQGFFAVIAIFLFLLALLVP. Residues 85-91 lie on the Cytoplasmic side of the membrane; that stretch reads TKNYEKN. The chain crosses the membrane as a helical span at residues 92-112; it reads YNAFFFIMLIVLVAVLVPGVG. At 113 to 121 the chain is on the periplasmic side; that stretch reads KSVNGARRW. Residues 122 to 142 form a helical membrane-spanning segment; sequence IPLIIINIQVAELAKLLAIIF. Topologically, residues 143 to 160 are cytoplasmic; that stretch reads FSGYIAENLPKMTNFKEG. A run of 2 helical transmembrane segments spans residues 161-181 and 182-202; these read ILTP…QPDF and GSTV…GNKV. Residue Arg-203 is a topological domain, cytoplasmic. Residues 204 to 224 traverse the membrane as a helical segment; it reads WYGLLIGAMLIMATMLVIISP. The Periplasmic segment spans residues 225-284; the sequence is YRMHRITGFLHPWENANGSGYQLVQALIGFGRGGWFGDGLGNGVQKQFFLPEAHTDFITS. Residues 285-305 traverse the membrane as a helical segment; the sequence is VIAEEIGVIGLMILLMVYLFI. At 306 to 324 the chain is on the cytoplasmic side; that stretch reads VFRAMNIAKMAFELKRYYQ. The helical transmembrane segment at 325-345 threads the bilayer; sequence AFLSYGISFWIGFQVFVNIGV. Topologically, residues 346–357 are periplasmic; that stretch reads NTGLLPTKGLTL. A helical membrane pass occupies residues 358–378; that stretch reads PLISYGGSSLLIMCFTLGILV. Over 379-402 the chain is Cytoplasmic; that stretch reads RVDFENKLLADTINPKYIYKKVRK.

It belongs to the SEDS family. FtsW subfamily.

The protein resides in the cell inner membrane. The catalysed reaction is [GlcNAc-(1-&gt;4)-Mur2Ac(oyl-L-Ala-gamma-D-Glu-L-Lys-D-Ala-D-Ala)](n)-di-trans,octa-cis-undecaprenyl diphosphate + beta-D-GlcNAc-(1-&gt;4)-Mur2Ac(oyl-L-Ala-gamma-D-Glu-L-Lys-D-Ala-D-Ala)-di-trans,octa-cis-undecaprenyl diphosphate = [GlcNAc-(1-&gt;4)-Mur2Ac(oyl-L-Ala-gamma-D-Glu-L-Lys-D-Ala-D-Ala)](n+1)-di-trans,octa-cis-undecaprenyl diphosphate + di-trans,octa-cis-undecaprenyl diphosphate + H(+). It functions in the pathway cell wall biogenesis; peptidoglycan biosynthesis. Its function is as follows. Peptidoglycan polymerase that is essential for cell division. This chain is Probable peptidoglycan glycosyltransferase FtsW, found in Francisella salina.